Here is a 180-residue protein sequence, read N- to C-terminus: Centromere protein M (180 aa).

Component of the CENPA-NAC complex, at least composed of CENPA, CENPC, CENPH, CENPM, CENPN, CENPT and CENPU. The CENPA-NAC complex interacts with the CENPA-CAD complex, composed of CENPI, CENPK, CENPL, CENPO, CENPP, CENPQ, CENPR and CENPS. As to expression, isoform 3 is highly expressed in spleen, and intermediately in heart, prostate and ovary. Isoform 3 is highly expressed in resting CD19 B-cells and B-lineage chronic lymphocytic leukemia (B-CLL) cells and weakly expressed in activated B-cells. Isoform 1 is selectively expressed in activated CD19 cells and weakly in resting CD19 B-cells.

Its subcellular location is the nucleus. It is found in the cytoplasm. The protein resides in the chromosome. The protein localises to the centromere. It localises to the kinetochore. Its function is as follows. Component of the CENPA-NAC (nucleosome-associated) complex, a complex that plays a central role in assembly of kinetochore proteins, mitotic progression and chromosome segregation. The CENPA-NAC complex recruits the CENPA-CAD (nucleosome distal) complex and may be involved in incorporation of newly synthesized CENPA into centromeres. The chain is Centromere protein M (CENPM) from Homo sapiens (Human).